The chain runs to 261 residues: Zinc finger protein 664 (261 aa).

9 consecutive C2H2-type zinc fingers follow at residues 3-25 (YKCP…QKIH), 31-53 (HKCD…WRDH), 59-81 (YKCD…KKIH), 87-109 (YKCY…MRVH), 115-137 (YVCS…QRVH), 143-165 (FKCE…QRVH), 171-193 (YKCY…QRVH), 199-221 (YRCC…QRVH), and 227-249 (FKCD…QRVH). A Glycyl lysine isopeptide (Lys-Gly) (interchain with G-Cter in SUMO2) cross-link involves residue K257.

Belongs to the krueppel C2H2-type zinc-finger protein family.

Its subcellular location is the nucleus. In terms of biological role, may be involved in transcriptional regulation. The polypeptide is Zinc finger protein 664 (ZNF664) (Pongo abelii (Sumatran orangutan)).